Reading from the N-terminus, the 174-residue chain is Adenine phosphoribosyltransferase (174 aa).

Belongs to the purine/pyrimidine phosphoribosyltransferase family. As to quaternary structure, homodimer.

It localises to the cytoplasm. It catalyses the reaction AMP + diphosphate = 5-phospho-alpha-D-ribose 1-diphosphate + adenine. The protein operates within purine metabolism; AMP biosynthesis via salvage pathway; AMP from adenine: step 1/1. Functionally, catalyzes a salvage reaction resulting in the formation of AMP, that is energically less costly than de novo synthesis. This is Adenine phosphoribosyltransferase from Nitrosomonas europaea (strain ATCC 19718 / CIP 103999 / KCTC 2705 / NBRC 14298).